Consider the following 582-residue polypeptide: Protein NUCLEAR FUSION DEFECTIVE 4 (582 aa).

Residues methionine 1 to aspartate 20 form a disordered region. A run of 8 helical transmembrane segments spans residues valine 46 to tyrosine 66, isoleucine 100 to valine 120, isoleucine 132 to cysteine 152, leucine 172 to phenylalanine 192, leucine 202 to valine 222, valine 243 to serine 263, leucine 270 to tyrosine 290, and leucine 358 to serine 378. N-linked (GlcNAc...) asparagine glycosylation is present at asparagine 391. Transmembrane regions (helical) follow at residues leucine 395–alanine 412, threonine 425–serine 445, leucine 458–phenylalanine 478, isoleucine 489–tyrosine 509, and threonine 536–isoleucine 556.

The protein localises to the membrane. Functionally, required for karyogamy during female gametophyte development, when the two polar nuclei fuse to form the diploid central cell nucleus. The sequence is that of Protein NUCLEAR FUSION DEFECTIVE 4 from Arabidopsis thaliana (Mouse-ear cress).